The following is a 514-amino-acid chain: Ferrochelatase-2, chloroplastic (514 aa).

The protein belongs to the ferrochelatase family.

It localises to the plastid. The protein localises to the chloroplast. It catalyses the reaction heme b + 2 H(+) = protoporphyrin IX + Fe(2+). It participates in porphyrin-containing compound metabolism; protoheme biosynthesis; protoheme from protoporphyrin-IX: step 1/1. In terms of biological role, catalyzes the ferrous insertion into protoporphyrin IX. The sequence is that of Ferrochelatase-2, chloroplastic (HEMH) from Cucumis sativus (Cucumber).